The primary structure comprises 151 residues: Large ribosomal subunit protein bL9 (151 aa).

This sequence belongs to the bacterial ribosomal protein bL9 family.

In terms of biological role, binds to the 23S rRNA. This Mycolicibacterium vanbaalenii (strain DSM 7251 / JCM 13017 / BCRC 16820 / KCTC 9966 / NRRL B-24157 / PYR-1) (Mycobacterium vanbaalenii) protein is Large ribosomal subunit protein bL9.